A 504-amino-acid polypeptide reads, in one-letter code: Cytochrome P450 6B6 (504 aa).

Position 445 (cysteine 445) interacts with heme.

This sequence belongs to the cytochrome P450 family. Heme is required as a cofactor.

It localises to the endoplasmic reticulum membrane. The protein resides in the microsome membrane. The enzyme catalyses an organic molecule + reduced [NADPH--hemoprotein reductase] + O2 = an alcohol + oxidized [NADPH--hemoprotein reductase] + H2O + H(+). The sequence is that of Cytochrome P450 6B6 (CYP6B6) from Helicoverpa armigera (Cotton bollworm).